The sequence spans 354 residues: MKFIAPIALLGMFQAASASPVDIKTSNAGLQVTLSQINNTRIKAVVQNTGSEEVTFMHMNFFKDASPVKKVSIFRNNDEVEFQGIKYRVQTDDLSDEVLTSLAPGASFEDEFDIAATSDLSSGGPVTIRSEGIVPLVTEKSVTGSLSYSSNELTIDVDGAEAAKIETVGAQLSKLSKRTRVSSCSGTRATALQTALRNAASLASRAASAASQGGSTFTTFFKSDSSSTRNAVAARLRAVASESSSTSSGSTTYYCTDVYGYCSSNVLAYTLPAYNIIANCDIYYTYLPALTGTCYAQDQATTTLHEFTHAPGVYSPGTDDLGYGYDAATRLSASQALNNADSYALYANAVYLGC.

Residues 1-19 (MKFIAPIALLGMFQAASAS) form the signal peptide. Residues 20–178 (PVDIKTSNAG…GAQLSKLSKR (159 aa)) constitute a propeptide that is removed on maturation. 2 disulfides stabilise this stretch: C184-C255 and C262-C280. H305 lines the Zn(2+) pocket. E306 is an active-site residue. 2 residues coordinate Zn(2+): H309 and D320.

This sequence belongs to the peptidase M35 family. Zn(2+) is required as a cofactor.

Its subcellular location is the secreted. It catalyses the reaction Preferential cleavage of bonds with hydrophobic residues in P1'. Also 3-Asn-|-Gln-4 and 8-Gly-|-Ser-9 bonds in insulin B chain.. Functionally, secreted metalloproteinase that allows assimilation of proteinaceous substrates. Shows high activities on basic nuclear substrates such as histone and protamine. The sequence is that of Neutral protease 2 homolog AN7962 from Emericella nidulans (strain FGSC A4 / ATCC 38163 / CBS 112.46 / NRRL 194 / M139) (Aspergillus nidulans).